Here is a 940-residue protein sequence, read N- to C-terminus: Isoleucine--tRNA ligase (940 aa).

The 'HIGH' region motif lies at proline 58–histidine 68. Glutamate 564 serves as a coordination point for L-isoleucyl-5'-AMP. The short motif at lysine 605–serine 609 is the 'KMSKS' region element. Lysine 608 is an ATP binding site. 4 residues coordinate Zn(2+): cysteine 903, cysteine 906, cysteine 923, and cysteine 926.

Belongs to the class-I aminoacyl-tRNA synthetase family. IleS type 1 subfamily. As to quaternary structure, monomer. The cofactor is Zn(2+).

Its subcellular location is the cytoplasm. The catalysed reaction is tRNA(Ile) + L-isoleucine + ATP = L-isoleucyl-tRNA(Ile) + AMP + diphosphate. Catalyzes the attachment of isoleucine to tRNA(Ile). As IleRS can inadvertently accommodate and process structurally similar amino acids such as valine, to avoid such errors it has two additional distinct tRNA(Ile)-dependent editing activities. One activity is designated as 'pretransfer' editing and involves the hydrolysis of activated Val-AMP. The other activity is designated 'posttransfer' editing and involves deacylation of mischarged Val-tRNA(Ile). This Shewanella sediminis (strain HAW-EB3) protein is Isoleucine--tRNA ligase.